The primary structure comprises 121 residues: Large ribosomal subunit protein bL12 (121 aa).

This sequence belongs to the bacterial ribosomal protein bL12 family. Homodimer. Part of the ribosomal stalk of the 50S ribosomal subunit. Forms a multimeric L10(L12)X complex, where L10 forms an elongated spine to which 2 to 4 L12 dimers bind in a sequential fashion. Binds GTP-bound translation factors.

Its function is as follows. Forms part of the ribosomal stalk which helps the ribosome interact with GTP-bound translation factors. Is thus essential for accurate translation. This Ureaplasma parvum serovar 3 (strain ATCC 27815 / 27 / NCTC 11736) protein is Large ribosomal subunit protein bL12.